Consider the following 138-residue polypeptide: MRTLWIMAVLLLGVEGDLMQFETLIMKIAKRSGMFWYSAYGCYCGWGGQGRPQDATDRCCFVHDCCYGKVTGCDPKLDSYTYSVENGDVVCGGNDPCKKEICECDRAAAICFRDNKVTYDNKYWRFPPQNCKEESEPC.

Positions 1 to 16 are cleaved as a signal peptide; the sequence is MRTLWIMAVLLLGVEG. 7 disulfide bridges follow: Cys-42/Cys-131, Cys-44/Cys-60, Cys-59/Cys-111, Cys-65/Cys-138, Cys-66/Cys-104, Cys-73/Cys-97, and Cys-91/Cys-102. 3 residues coordinate Ca(2+): Tyr-43, Gly-45, and Gly-47. His-63 is a catalytic residue. Position 64 (Asp-64) interacts with Ca(2+). Residue Asp-105 is part of the active site.

Monomer. Requires Ca(2+) as cofactor. As to expression, expressed by the venom gland.

The protein resides in the secreted. The catalysed reaction is a 1,2-diacyl-sn-glycero-3-phosphocholine + H2O = a 1-acyl-sn-glycero-3-phosphocholine + a fatty acid + H(+). Inhibited by divalent cations different from calcium ions (cadmium, magnesium, manganese, zinc), since they act as competitive antagonists of this cofactor. Its function is as follows. Snake venom phospholipase A2 (PLA2) that triggers a high neuromuscular toxicity in chick biventer cervicis preparations, but not in mouse phrenic nerve-diaphragm (PND) preparations, suggesting a selective neurotoxin activity towards birds. Does not induce myotoxic, coagulant, anticoagulant, edema, and antibacterial activities. PLA2 catalyzes the calcium-dependent hydrolysis of the 2-acyl groups in 3-sn-phosphoglycerides. The chain is Acidic phospholipase A2 AplTX-I from Agkistrodon piscivorus leucostoma (Western cottonmouth).